The chain runs to 115 residues: Replication initiation control protein YabA (115 aa).

His90, Cys92, Cys106, and Cys109 together coordinate Zn(2+).

It belongs to the YabA family. Homotetramer. Interacts with both DnaA and DnaN, acting as a bridge between these two proteins. It depends on Zn(2+) as a cofactor.

It localises to the cytoplasm. It is found in the nucleoid. In terms of biological role, involved in control of chromosome replication initiation. Inhibits the cooperative binding of DnaA to the oriC region, thus negatively regulating initiation of chromosome replication. Inhibits the ability of DnaA-ATP to form a helix on DNA; does not disassemble preformed DnaA-DNA helices. Decreases the residence time of DnaA on the chromosome at its binding sites (oriC, replication forks and promoter-binding sites). Tethers DnaA to the replication machinery via the DNA polymerase beta sliding clamp subunit (dnaN). Associates with oriC and other DnaA targets on the chromosome in a DnaA-dependent manner. The protein is Replication initiation control protein YabA of Staphylococcus aureus (strain bovine RF122 / ET3-1).